A 420-amino-acid chain; its full sequence is ATP phosphoribosyltransferase regulatory subunit (420 aa).

Belongs to the class-II aminoacyl-tRNA synthetase family. HisZ subfamily. As to quaternary structure, heteromultimer composed of HisG and HisZ subunits.

It localises to the cytoplasm. The protein operates within amino-acid biosynthesis; L-histidine biosynthesis; L-histidine from 5-phospho-alpha-D-ribose 1-diphosphate: step 1/9. In terms of biological role, required for the first step of histidine biosynthesis. May allow the feedback regulation of ATP phosphoribosyltransferase activity by histidine. The chain is ATP phosphoribosyltransferase regulatory subunit from Bacillus anthracis (strain A0248).